A 127-amino-acid polypeptide reads, in one-letter code: Large ribosomal subunit protein bL20 (127 aa).

This sequence belongs to the bacterial ribosomal protein bL20 family.

Functionally, binds directly to 23S ribosomal RNA and is necessary for the in vitro assembly process of the 50S ribosomal subunit. It is not involved in the protein synthesizing functions of that subunit. This Corynebacterium urealyticum (strain ATCC 43042 / DSM 7109) protein is Large ribosomal subunit protein bL20.